Here is a 125-residue protein sequence, read N- to C-terminus: MARIAGIDLPREKRIVVGLTYIFGIGNSLSKLILKKAGIDESIRVKDLNESQEAAIRKTLEETAKVEGDLRSEIQLNIKRLMDIGCYRGLRHRRGLPVNGQRTRTNARTRKGGKKTVANKKKVTK.

Residues 95–125 are disordered; it reads GLPVNGQRTRTNARTRKGGKKTVANKKKVTK. Residues 105 to 125 show a composition bias toward basic residues; that stretch reads TNARTRKGGKKTVANKKKVTK.

Belongs to the universal ribosomal protein uS13 family. As to quaternary structure, part of the 30S ribosomal subunit. Forms a loose heterodimer with protein S19. Forms two bridges to the 50S subunit in the 70S ribosome.

Functionally, located at the top of the head of the 30S subunit, it contacts several helices of the 16S rRNA. In the 70S ribosome it contacts the 23S rRNA (bridge B1a) and protein L5 of the 50S subunit (bridge B1b), connecting the 2 subunits; these bridges are implicated in subunit movement. Contacts the tRNAs in the A and P-sites. This Leptospira interrogans serogroup Icterohaemorrhagiae serovar copenhageni (strain Fiocruz L1-130) protein is Small ribosomal subunit protein uS13.